Consider the following 218-residue polypeptide: Phosphoglycolate phosphatase (218 aa).

The active-site Nucleophile is the D7. The Mg(2+) site is built by D7, D9, and D167.

This sequence belongs to the HAD-like hydrolase superfamily. CbbY/CbbZ/Gph/YieH family. It depends on Mg(2+) as a cofactor.

It catalyses the reaction 2-phosphoglycolate + H2O = glycolate + phosphate. Its pathway is organic acid metabolism; glycolate biosynthesis; glycolate from 2-phosphoglycolate: step 1/1. Its function is as follows. Specifically catalyzes the dephosphorylation of 2-phosphoglycolate. Is involved in the dissimilation of the intracellular 2-phosphoglycolate formed during the DNA repair of 3'-phosphoglycolate ends, a major class of DNA lesions induced by oxidative stress. The polypeptide is Phosphoglycolate phosphatase (Cereibacter sphaeroides (strain ATCC 17025 / ATH 2.4.3) (Rhodobacter sphaeroides)).